Consider the following 86-residue polypeptide: Small ribosomal subunit protein bS20 (86 aa).

Residues 1 to 11 (MANIKQQKKRN) are compositionally biased toward basic residues. A disordered region spans residues 1-20 (MANIKQQKKRNKTNEKRRLQ).

Belongs to the bacterial ribosomal protein bS20 family.

Binds directly to 16S ribosomal RNA. This is Small ribosomal subunit protein bS20 from Aster yellows witches'-broom phytoplasma (strain AYWB).